Consider the following 502-residue polypeptide: Lysine--tRNA ligase (502 aa).

E413 and E420 together coordinate Mg(2+).

The protein belongs to the class-II aminoacyl-tRNA synthetase family. As to quaternary structure, homodimer. Requires Mg(2+) as cofactor.

Its subcellular location is the cytoplasm. The catalysed reaction is tRNA(Lys) + L-lysine + ATP = L-lysyl-tRNA(Lys) + AMP + diphosphate. This chain is Lysine--tRNA ligase (lysS), found in Haemophilus influenzae (strain ATCC 51907 / DSM 11121 / KW20 / Rd).